The chain runs to 468 residues: 6-phospho-beta-galactosidase (468 aa).

Q19, H116, N159, E160, and N297 together coordinate D-galactose 6-phosphate. Catalysis depends on E160, which acts as the Proton donor. E375 acts as the Nucleophile in catalysis. Residues S428, W429, K435, and Y437 each coordinate D-galactose 6-phosphate.

This sequence belongs to the glycosyl hydrolase 1 family.

The enzyme catalyses a 6-phospho-beta-D-galactoside + H2O = D-galactose 6-phosphate + an alcohol. It functions in the pathway carbohydrate metabolism; lactose degradation; D-galactose 6-phosphate and beta-D-glucose from lactose 6-phosphate: step 1/1. The protein is 6-phospho-beta-galactosidase of Streptococcus pyogenes serotype M28 (strain MGAS6180).